The chain runs to 255 residues: tRNA pseudouridine synthase B (255 aa).

Residue Asp58 is the Nucleophile of the active site.

It belongs to the pseudouridine synthase TruB family. Type 1 subfamily.

The catalysed reaction is uridine(55) in tRNA = pseudouridine(55) in tRNA. Responsible for synthesis of pseudouridine from uracil-55 in the psi GC loop of transfer RNAs. This chain is tRNA pseudouridine synthase B, found in Chlorobium chlorochromatii (strain CaD3).